Consider the following 246-residue polypeptide: Pyrroloquinoline-quinone synthase (246 aa).

This sequence belongs to the PqqC family.

The enzyme catalyses 6-(2-amino-2-carboxyethyl)-7,8-dioxo-1,2,3,4,7,8-hexahydroquinoline-2,4-dicarboxylate + 3 O2 = pyrroloquinoline quinone + 2 H2O2 + 2 H2O + H(+). The protein operates within cofactor biosynthesis; pyrroloquinoline quinone biosynthesis. Its function is as follows. Ring cyclization and eight-electron oxidation of 3a-(2-amino-2-carboxyethyl)-4,5-dioxo-4,5,6,7,8,9-hexahydroquinoline-7,9-dicarboxylic-acid to PQQ. The polypeptide is Pyrroloquinoline-quinone synthase (Acidiphilium cryptum (strain JF-5)).